The primary structure comprises 795 residues: Protein espinas (795 aa).

The disordered stretch occupies residues 30-96 (GTGLTFPPHR…FVSPLQRRHC (67 aa)). Residues 52–66 (ASMSSNVASTATSSN) are compositionally biased toward low complexity. Positions 135–243 (LDFQRNSQSD…AVRLLSDERP (109 aa)) constitute a PET domain. 3 LIM zinc-binding domains span residues 242 to 306 (RPCK…ETQK), 307 to 367 (PRCS…MFAE), and 368 to 430 (YCDY…GEPP). 2 disordered regions span residues 427 to 487 (GEPP…GSAG) and 616 to 684 (NRNT…EMQI). Composition is skewed to basic and acidic residues over residues 459 to 471 (RSGD…ESSR) and 637 to 649 (LDNR…RFHS). Over residues 650 to 662 (VQDTMSRSKSYTD) the composition is skewed to polar residues. Positions 666–675 (ARRRRRRRNQ) are enriched in basic residues.

Belongs to the prickle / espinas / testin family.

The protein is Protein espinas of Drosophila pseudoobscura pseudoobscura (Fruit fly).